A 255-amino-acid polypeptide reads, in one-letter code: MDEQVQEPLSDQVFINFRGDELREIFVNHLELQLRNAGINVFIDTKEQKGRRLQYLFTRIKKSKIALAIFSKRYCESKWCLDELVTMNEQMKEKKLVVIPIFYNVRSDDVKRAANPDGEGNLDGEFSLPFKQLKQNHAGEPERVEGWERALRSVTKRIGFSRSNSKYKHDTDFVLDIVKEVKKQLNIPTDNSWSAIGVAFLAITINLIFSFFIAPKYLPDQKFFQTPEWFIGTLAVVLASWFWYKNNQNKAPPPS.

A TIR domain is found at 9–185; the sequence is LSDQVFINFR…DIVKEVKKQL (177 aa). Residue E83 is part of the active site. 2 consecutive transmembrane segments (helical) span residues 195–215 and 223–243; these read AIGV…FIAP and FFQT…SWFW. Positions 201–255 constitute a KASH domain; sequence LAITINLIFSFFIAPKYLPDQKFFQTPEWFIGTLAVVLASWFWYKNNQNKAPPPS.

Forms homomers. Interacts with SUN1, SUN2, SUN3, SUN4 and SUN5.

It localises to the nucleus membrane. The catalysed reaction is NAD(+) + H2O = ADP-D-ribose + nicotinamide + H(+). Its function is as follows. Could play a role in nuclear morphology, specifically nuclear size. The polypeptide is TIR domain-containing protein (Arabidopsis thaliana (Mouse-ear cress)).